The chain runs to 450 residues: MSKRIIQLILLSAFARANYVEPFKSNPYIACSEASHCPKEWPCCSQYGQCGSGPLCISGCNPKFSHSPESCVPVPALLPQLEIVASDDKGVYLEMSGQPALVTKFQRKSSAQLLEVHHEEQQYGVSALEQDLNSRGLIHFPDYMITSKPKVAREMLEQYDFIHSGFISVDGKSESLILGMPKKTTGSLISSSKVFLYGRAAVTMKTSRGPGVITAIVFMSSTQDEIDYEFVGSELHTVQTNYYYQGELNHSRMRRHSLPSNSHEEYHIYEVDWDAERIHWMVDGEIVRTLYKRDTWDPVHKIYKYPQTPMMLQISLWPAGTPDAPQGTIEWAGGLIDWENAPDIKAHGQLAAQIQRVAITPYNNDFCPEIHESMGQWGAQNSEEEPFRVAYGYESNNGRFDPKKLKWYTDARLHLSSWHATGIKPTAAQRQQHHRRSLPHVEAPPITNTM.

An N-terminal signal peptide occupies residues 1–17 (MSKRIIQLILLSAFARA). In terms of domain architecture, GH16 spans 67-347 (SPESCVPVPA…WENAPDIKAH (281 aa)). The active-site Nucleophile is the E225. The active-site Proton donor is E229. The tract at residues 428 to 450 (AQRQQHHRRSLPHVEAPPITNTM) is disordered.

This sequence belongs to the glycosyl hydrolase 16 family. CRR1 subfamily.

Its subcellular location is the spore wall. In terms of biological role, spore specific glycosidase involved in spore wall assembly during sporulation. May be involved in copper import. The sequence is that of Probable glycosidase CRR1 (CRR1) from Eremothecium gossypii (strain ATCC 10895 / CBS 109.51 / FGSC 9923 / NRRL Y-1056) (Yeast).